Reading from the N-terminus, the 352-residue chain is Protein Wnt-3a (352 aa).

An N-terminal signal peptide occupies residues 1–18; sequence MGCFGYLLLIIGLHQVLA. Intrachain disulfides connect cysteine 77–cysteine 88, cysteine 128–cysteine 136, cysteine 138–cysteine 155, cysteine 203–cysteine 217, cysteine 205–cysteine 212, cysteine 297–cysteine 312, cysteine 327–cysteine 342, cysteine 329–cysteine 339, and cysteine 334–cysteine 335. A glycan (N-linked (GlcNAc...) asparagine) is linked at asparagine 87. A lipid anchor (O-palmitoleoyl serine) is attached at serine 209. Asparagine 298 carries an N-linked (GlcNAc...) asparagine glycan.

This sequence belongs to the Wnt family. In terms of processing, disulfide bonds have critical and distinct roles in secretion and activity. Loss of each conserved cysteine results in high molecular weight oxidized Wnt oligomers, which are formed through inter-Wnt disulfide bonding. Post-translationally, palmitoleoylation is required for efficient binding to frizzled receptors. Depalmitoleoylation leads to Wnt signaling pathway inhibition. In terms of tissue distribution, at neurula in anterior neural fold; at tailbud in dorsal midline of midbrain.

It is found in the secreted. The protein localises to the extracellular space. Its subcellular location is the extracellular matrix. Its function is as follows. Ligand for members of the frizzled family of seven transmembrane receptors. Functions in the canonical Wnt signaling pathway that results in activation of transcription factors of the TCF/LEF family. Required for normal embryonic mesoderm development and formation of caudal somites. Required for normal morphogenesis of the developing neural tube. In Xenopus laevis (African clawed frog), this protein is Protein Wnt-3a (wnt3a).